Here is a 152-residue protein sequence, read N- to C-terminus: Lipoprotein signal peptidase (152 aa).

The next 3 membrane-spanning stretches (helical) occupy residues 33–53 (VVPP…FGLL), 58–78 (MLFV…YFKI), and 83–102 (PVLD…NLAD). Catalysis depends on residues Asp-111 and Asp-125. A helical membrane pass occupies residues 120 to 140 (VFNLADTAIVTGAFLLAWALL).

The protein belongs to the peptidase A8 family.

The protein resides in the cell membrane. It catalyses the reaction Release of signal peptides from bacterial membrane prolipoproteins. Hydrolyzes -Xaa-Yaa-Zaa-|-(S,diacylglyceryl)Cys-, in which Xaa is hydrophobic (preferably Leu), and Yaa (Ala or Ser) and Zaa (Gly or Ala) have small, neutral side chains.. Its pathway is protein modification; lipoprotein biosynthesis (signal peptide cleavage). Its function is as follows. This protein specifically catalyzes the removal of signal peptides from prolipoproteins. The chain is Lipoprotein signal peptidase from Pelotomaculum thermopropionicum (strain DSM 13744 / JCM 10971 / SI).